Here is a 1394-residue protein sequence, read N- to C-terminus: MILPFEYYFLNDADNSSKSNYNNIQFINENQNNNLRQKPKFYPNNQFLIEQEQDKYENKKIKNYISDQIQLQPKNTPINKMNHFANINNYQDNKFSLESLNQAQQDNLQKEEDLSILSFDSQEELNYLQEGEENNQFLNEGDIFGYQTRYTFFENRNNLLVEDATNKNNNNYNYNYNNNNSSTQRNYDFNYQNTNEMLQKKKKSNFQNKSQSQLNNHKNEEKKPSQQRKEQLMKRFESLSRIYNKELSQTVTNGWLKPSQAKTISQDNNLGSSAAKSSKVFYQQQKPFSAQITNSSLKYAAASNGFQNLDFSYKQKQQLIQQETKNKIKEQQNVESNNRISMKPPKSANLNSYKNISNLKNFKEIILTRPNSKQVKFQQQNSVNSQPSSLVSQPLKIQSIEKNNLNSNLNDQNFYDDFAELGSTETTGFSFQNVFQLAGVPKDFIASPRSPVQELNQKQENRENELDQMLNDHHIYVASSVTNQNQIKNEQTERKPNMFGKTLTTLARPFSKEYSNRKDILKSAQQNVRFNKNLDYLDSQNKVVAKNKKRTIFKINQNNLQGNQKDLQSNQTSSVISQQNSIQQYGDDNYQQNQVLNDDQSPLIKQNSIDLNAAEIIQNDENENTQKENVLQQKKNQSNQIVTSQQQSNNYFKQETTTNTSNFSTTSNRIISLQALRQKNNSTVKNSDNNNQNQTNPQNQNTNLKENNDKQNLKKTKIQSASANQAGQSNNQLQKTFFINSQDEYVRRTLLRMGWKENKLLLNNNFDLKWIYIDSNDDYKFLNDNQFYNHFKNNTELTQKGRLLYNLKNNTQFGVNQELFFPRCYDLGNDQERGEFSNEFNRMNVMNLLKKHIQYIKLRRSQTYQEIKQAYQQKQANKLNAQVKDGIFFAKVTKQKFFSPLMYEDTKRDNRFIFNITVIAEAVEILKKLKRQQEEYIDETRQSRDCQLYIYQTNFKLESMISQYVKINVPFDEEKFVFEKIVGMSKEHWSSPSMKLMKKLYSLYKYFKDADPQFKVSGTKNIWIIKPSANSRGSGIYLVDKLDEAIDSGLKMQARIVQKYIERPLIFQGAKYKKLNNKKFDIRQWVLVTSFKPLKIYFFTSSYLRVCSQSFDLDNIKILSKHLTNFSLNKNSLAKENWDETVVELKDFISYLKEFKNIDYQEDVKPKIKDLVIETIKCAADKIVNRKKSFELYGFDILLDEYAHPWLLEVNLSPACSERSSFLTEMLDAMAYKMFQIVFKQNNLQEDLEINKETAISTAPASCQNPDYDWEEIYNEEQKEYFCEEDNNMQLAFNNDIQLMVIGQKADLKKEKNLDKKYFQYWGAIKIQSKIRSFLAKKKLQRLKNQKFTFAAIKIQQKMRQFLAKKQLNILKKQQQTNINIPIEDFNQVSVIEV.

Disordered stretches follow at residues 201–230, 563–582, 620–663, and 682–706; these read KKKS…QRKE, NQKD…QNSI, DENE…TSNF, and STVK…NLKE. Residues 205-216 are compositionally biased toward low complexity; it reads NFQNKSQSQLNN. The segment covering 217–230 has biased composition (basic and acidic residues); it reads HKNEEKKPSQQRKE. Over residues 568-582 the composition is skewed to low complexity; that stretch reads QSNQTSSVISQQNSI. Residues 627–655 show a composition bias toward polar residues; it reads KENVLQQKKNQSNQIVTSQQQSNNYFKQE. Residues 682–703 are compositionally biased toward low complexity; that stretch reads STVKNSDNNNQNQTNPQNQNTN. The TTL domain occupies 911-1250; it reads RFIFNITVIA…QNNLQEDLEI (340 aa). Residues 1058 to 1061, K1079, and D1081 each bind ATP; that span reads QKYI. 2 consecutive IQ domains span residues 1320–1349 and 1348–1377; these read QYWG…QKFT and FTFA…QQQT.

It is found in the cell projection. It localises to the cilium. The protein resides in the cytoplasm. The protein localises to the cytoskeleton. Its subcellular location is the cilium axoneme. In terms of biological role, probable glycylase which modifies tubulin, generating side chains of glycine on the gamma-carboxyl groups of specific glutamate residues within the C-terminal tail of tubulin. The chain is Tubulin glycylase 3E (TTLL3E) from Tetrahymena thermophila (strain SB210).